The sequence spans 180 residues: Hypoxanthine-guanine phosphoribosyltransferase (180 aa).

Residues K43 and G44 each contribute to the diphosphate site. Mg(2+) contacts are provided by E99 and D100. The Proton acceptor role is filled by D103. Residues K131, 152–153 (FI), and D159 each bind GMP. Residue R165 participates in diphosphate binding.

Belongs to the purine/pyrimidine phosphoribosyltransferase family. Mg(2+) is required as a cofactor.

It localises to the cytoplasm. The enzyme catalyses IMP + diphosphate = hypoxanthine + 5-phospho-alpha-D-ribose 1-diphosphate. It carries out the reaction GMP + diphosphate = guanine + 5-phospho-alpha-D-ribose 1-diphosphate. It functions in the pathway purine metabolism; IMP biosynthesis via salvage pathway; IMP from hypoxanthine: step 1/1. The protein operates within purine metabolism; GMP biosynthesis via salvage pathway; GMP from guanine: step 1/1. Its function is as follows. Purine salvage pathway enzyme that catalyzes the transfer of the ribosyl-5-phosphate group from 5-phospho-alpha-D-ribose 1-diphosphate (PRPP) to the N9 position of the 6-oxopurines hypoxanthine and guanine to form the corresponding ribonucleotides IMP (inosine 5'-monophosphate) and GMP (guanosine 5'-monophosphate), with the release of PPi. This is Hypoxanthine-guanine phosphoribosyltransferase (hpt) from Streptococcus agalactiae serotype III (strain NEM316).